The primary structure comprises 259 residues: Large ribosomal subunit protein uL3m (259 aa).

A mitochondrion-targeting transit peptide spans 1-15 (MQSRFLISPTLIRTF). Over residues 176–197 (ASHGASLSHRTPGSTGQNTTPS) the composition is skewed to polar residues. A disordered region spans residues 176–208 (ASHGASLSHRTPGSTGQNTTPSRVLPGRKMAGH).

It belongs to the universal ribosomal protein uL3 family. As to quaternary structure, component of the mitochondrial large ribosomal subunit (mt-LSU). Mature yeast 74S mitochondrial ribosomes consist of a small (37S) and a large (54S) subunit. The 37S small subunit contains a 15S ribosomal RNA (15S mt-rRNA) and at least 32 different proteins. The 54S large subunit contains a 21S rRNA (21S mt-rRNA) and at least 45 different proteins.

It is found in the cytoplasm. The protein resides in the mitochondrion. In terms of biological role, component of the mitochondrial ribosome (mitoribosome), a dedicated translation machinery responsible for the synthesis of mitochondrial genome-encoded proteins, including at least some of the essential transmembrane subunits of the mitochondrial respiratory chain. The mitoribosomes are attached to the mitochondrial inner membrane and translation products are cotranslationally integrated into the membrane. The protein is Large ribosomal subunit protein uL3m (mrpl9) of Schizosaccharomyces pombe (strain 972 / ATCC 24843) (Fission yeast).